Reading from the N-terminus, the 481-residue chain is Cobyric acid synthase (481 aa).

Residues 248 to 435 form the GATase cobBQ-type domain; that stretch reads ALTVAWLAFS…LHGMFGADGF (188 aa). C330 (nucleophile) is an active-site residue. H427 is a catalytic residue.

It belongs to the CobB/CobQ family. CobQ subfamily.

It functions in the pathway cofactor biosynthesis; adenosylcobalamin biosynthesis. In terms of biological role, catalyzes amidations at positions B, D, E, and G on adenosylcobyrinic A,C-diamide. NH(2) groups are provided by glutamine, and one molecule of ATP is hydrogenolyzed for each amidation. This is Cobyric acid synthase from Cereibacter sphaeroides (strain ATCC 17023 / DSM 158 / JCM 6121 / CCUG 31486 / LMG 2827 / NBRC 12203 / NCIMB 8253 / ATH 2.4.1.) (Rhodobacter sphaeroides).